A 62-amino-acid polypeptide reads, in one-letter code: Large ribosomal subunit protein bL33 (62 aa).

This sequence belongs to the bacterial ribosomal protein bL33 family.

This is Large ribosomal subunit protein bL33 from Bacteroides thetaiotaomicron (strain ATCC 29148 / DSM 2079 / JCM 5827 / CCUG 10774 / NCTC 10582 / VPI-5482 / E50).